Here is a 139-residue protein sequence, read N- to C-terminus: Phosphoribosyl-AMP cyclohydrolase (139 aa).

Mg(2+) is bound at residue Asp91. Cys92 contributes to the Zn(2+) binding site. 2 residues coordinate Mg(2+): Asp93 and Asp95. Positions 110 and 117 each coordinate Zn(2+).

It belongs to the PRA-CH family. As to quaternary structure, homodimer. Mg(2+) is required as a cofactor. It depends on Zn(2+) as a cofactor.

It is found in the cytoplasm. It catalyses the reaction 1-(5-phospho-beta-D-ribosyl)-5'-AMP + H2O = 1-(5-phospho-beta-D-ribosyl)-5-[(5-phospho-beta-D-ribosylamino)methylideneamino]imidazole-4-carboxamide. It participates in amino-acid biosynthesis; L-histidine biosynthesis; L-histidine from 5-phospho-alpha-D-ribose 1-diphosphate: step 3/9. Its function is as follows. Catalyzes the hydrolysis of the adenine ring of phosphoribosyl-AMP. The chain is Phosphoribosyl-AMP cyclohydrolase from Brucella abortus (strain S19).